We begin with the raw amino-acid sequence, 309 residues long: MEFTPLAFESLGVRSQATLVETKDVRILIDPAVSLAPRRFGLPPHQIEVDRLTELAKKIYEEAKIADIIIITHYHYDHHDPGYVIPLDIYQNKTVYIKDPQNFINPSQKFRRAPRFIKTITGKPKTMESADGKVVKYGSTTIQFSKAVPHGADERLGYVIQVAINDKDSTILFTSDIEGAPKNSHIDFIKSVRPNFLIIDGPLSYLLGRALSQDELDTEIKNMEEVVRNGLQYAIIDHHVLRDPNYESVLKPVKEVANSVGCKVISASEYLREPPQLLEAKRRELFQRDNRPAKIPRGLAKLLSAGEGG.

Belongs to the UPF0282 family.

The polypeptide is UPF0282 protein Saci_0277 (Sulfolobus acidocaldarius (strain ATCC 33909 / DSM 639 / JCM 8929 / NBRC 15157 / NCIMB 11770)).